The sequence spans 110 residues: Large ribosomal subunit protein uL22 (110 aa).

The protein belongs to the universal ribosomal protein uL22 family. Part of the 50S ribosomal subunit.

In terms of biological role, this protein binds specifically to 23S rRNA; its binding is stimulated by other ribosomal proteins, e.g. L4, L17, and L20. It is important during the early stages of 50S assembly. It makes multiple contacts with different domains of the 23S rRNA in the assembled 50S subunit and ribosome. The globular domain of the protein is located near the polypeptide exit tunnel on the outside of the subunit, while an extended beta-hairpin is found that lines the wall of the exit tunnel in the center of the 70S ribosome. In Mycoplasma mobile (strain ATCC 43663 / 163K / NCTC 11711) (Mesomycoplasma mobile), this protein is Large ribosomal subunit protein uL22.